The primary structure comprises 384 residues: WAT1-related protein At4g08290 (384 aa).

10 helical membrane passes run 15-35, 43-63, 73-93, 104-124, 140-160, 186-206, 219-239, 255-275, 282-302, and 307-327; these read LLMI…MATL, VVIV…ALIF, LSVL…DQGF, TYTS…AWIL, IIGT…KGPL, WVVG…FYVL, SLSA…ALVV, FAPL…QGMV, VFVT…ASFI, and IHFG…MVVW. 2 EamA domains span residues 25–154 and 198–326; these read AGTY…LVMT and VAWS…YMVV.

This sequence belongs to the drug/metabolite transporter (DMT) superfamily. Plant drug/metabolite exporter (P-DME) (TC 2.A.7.4) family.

It is found in the membrane. The protein is WAT1-related protein At4g08290 of Arabidopsis thaliana (Mouse-ear cress).